The chain runs to 289 residues: Four and a half LIM domains protein 3 (289 aa).

The residue at position 2 (Ser-2) is an N-acetylserine. The C4-type zinc-finger motif lies at 7 to 31 (CAKCNESLYGRKYIQTDSGPYCVPC). 2 consecutive LIM zinc-binding domains span residues 40 to 92 (CAEC…CNEC) and 101 to 153 (CSAC…CVPC). The residue at position 157 (Lys-157) is an N6-acetyllysine. 2 consecutive LIM zinc-binding domains span residues 162 to 212 (CARC…CVAC) and 221 to 275 (CSSC…FVPD). Lys-244 carries the N6-acetyllysine modification.

Interacts with SOX15; the interaction recruits FHL3 to FOXK1 promoters where it acts as a transcriptional coactivator of FOXK1. As to expression, expressed in myogenic progenitor cells (at protein level). Expressed in skeletal striated muscle and the heart. Expressed to a lesser extent, in lung, and kidney. Expressed in skin and skeletal muscles such as the masseter, tongue, tibialis anterior and plantar muscles.

It localises to the nucleus. The protein localises to the cytoplasm. In terms of biological role, recruited by SOX15 to FOXK1 promoters where it acts as a transcriptional coactivator of FOXK1. This chain is Four and a half LIM domains protein 3 (Fhl3), found in Mus musculus (Mouse).